The following is a 559-amino-acid chain: Aspartokinase 3, chloroplastic (559 aa).

The transit peptide at 1–85 (MAASMQFYGV…LNKTEKKLTC (85 aa)) directs the protein to the chloroplast. 3 residues coordinate ATP: K88, G91, and S120. Position 204 (E204) interacts with substrate. 2 ACT domains span residues 402-480 (ITST…SIIS) and 481-559 (LIGN…AASS).

It belongs to the aspartokinase family. In terms of tissue distribution, highly expressed in xylem of leaves and hypocotyls, stele of roots and in trichomes after bolting. Weak expression in veins and mesophyll cells of caulone leaves, inflorescence stems, sepals, petals and stigmata.

Its subcellular location is the plastid. The protein localises to the chloroplast. It catalyses the reaction L-aspartate + ATP = 4-phospho-L-aspartate + ADP. The protein operates within amino-acid biosynthesis; L-lysine biosynthesis via DAP pathway; (S)-tetrahydrodipicolinate from L-aspartate: step 1/4. It participates in amino-acid biosynthesis; L-methionine biosynthesis via de novo pathway; L-homoserine from L-aspartate: step 1/3. Its pathway is amino-acid biosynthesis; L-threonine biosynthesis; L-threonine from L-aspartate: step 1/5. Its activity is regulated as follows. Allosterically inhibited by lysine, but not by S-adenosyl-L-methionine (SAM). K(0.5) for lysine in the presence of physiological concentrations of substrates is 7.4 uM. No inhibition by threonine or leucine and no activation or inhibition by alanine, cysteine, isoleucine, serine, valine, methionine, glutamine, asparagine, glutamic acid or arginine. Its function is as follows. Involved in the first step of essential amino acids lysine, threonine, methionine and isoleucine synthesis via the aspartate-family pathway. This Arabidopsis thaliana (Mouse-ear cress) protein is Aspartokinase 3, chloroplastic (AK3).